We begin with the raw amino-acid sequence, 308 residues long: MTKTLVFGHKNPDTDTICSAISYAELKKAQGADIEAVRLGELNSETTFVLDYFQATAPRLVQTVANEVSEVALVDHNERQQSANDIDEVTVTAVVDHHRIANFETSDPLYYRAEPVGCTTTILLKMFRENEVEISKTVAGLMLSAIISDTLLFQSPTCTEEDKVAAEKLAVIADVDIQTYGMEMLKAGADVSKKTVAELLLDAKEFNMNGNKVEIAQINVVDVNDVLNRRSEVEALMTQNVVDKGLDLYLFVITNILTNDSIGISIGSKTSVVEEAYGIKFVENQAPLKGVVSRKKQVVPILTDTFAK.

Mn(2+) contacts are provided by histidine 9, aspartate 13, aspartate 15, aspartate 75, histidine 97, and aspartate 149.

This sequence belongs to the PPase class C family. Mn(2+) serves as cofactor.

It is found in the cytoplasm. It catalyses the reaction diphosphate + H2O = 2 phosphate + H(+). This is Probable manganese-dependent inorganic pyrophosphatase from Listeria welshimeri serovar 6b (strain ATCC 35897 / DSM 20650 / CCUG 15529 / CIP 8149 / NCTC 11857 / SLCC 5334 / V8).